The chain runs to 33 residues: Brevinin-2DYb (33 aa).

A disulfide bond links cysteine 27 and cysteine 33.

As to expression, expressed by the skin glands.

The protein resides in the secreted. Functionally, antimicrobial peptide. Active against the Gram-positive bacterium S.aureus (MIC=30 uM) and the Gram-negative bacterium E.coli (MIC=30 uM). The polypeptide is Brevinin-2DYb (Rana dybowskii (Dybovsky's frog)).